The chain runs to 422 residues: Histidine--tRNA ligase (422 aa).

The protein belongs to the class-II aminoacyl-tRNA synthetase family. As to quaternary structure, homodimer.

The protein resides in the cytoplasm. It catalyses the reaction tRNA(His) + L-histidine + ATP = L-histidyl-tRNA(His) + AMP + diphosphate + H(+). The protein is Histidine--tRNA ligase of Vibrio vulnificus (strain CMCP6).